Consider the following 232-residue polypeptide: DnaJ homolog subfamily B member 8 (232 aa).

In terms of domain architecture, J spans 3–69; the sequence is NYYEVLGVQA…KKRSLYDRAG (67 aa).

In terms of assembly, interacts with histone deacetylases HDAC4, HDAC6, and SIRT2, HDAC activity is required for antiaggregation.

Its function is as follows. Efficient suppressor of aggregation and toxicity of disease-associated polyglutamine proteins. In Homo sapiens (Human), this protein is DnaJ homolog subfamily B member 8 (DNAJB8).